The chain runs to 193 residues: Holliday junction branch migration complex subunit RuvA (193 aa).

The tract at residues 1 to 64 (MIGRIAGTLL…EDAHLLFGFA (64 aa)) is domain I. The tract at residues 65–144 (TATERNTFRE…DLGHAPGATP (80 aa)) is domain II. The segment at 145 to 151 (LADSAVD) is flexible linker. Positions 151–193 (DILNALLALGYSEKEAAQAIKQVPAGTGVSDGIKLALKALSKG) are domain III.

It belongs to the RuvA family. In terms of assembly, homotetramer. Forms an RuvA(8)-RuvB(12)-Holliday junction (HJ) complex. HJ DNA is sandwiched between 2 RuvA tetramers; dsDNA enters through RuvA and exits via RuvB. An RuvB hexamer assembles on each DNA strand where it exits the tetramer. Each RuvB hexamer is contacted by two RuvA subunits (via domain III) on 2 adjacent RuvB subunits; this complex drives branch migration. In the full resolvosome a probable DNA-RuvA(4)-RuvB(12)-RuvC(2) complex forms which resolves the HJ.

It localises to the cytoplasm. The RuvA-RuvB-RuvC complex processes Holliday junction (HJ) DNA during genetic recombination and DNA repair, while the RuvA-RuvB complex plays an important role in the rescue of blocked DNA replication forks via replication fork reversal (RFR). RuvA specifically binds to HJ cruciform DNA, conferring on it an open structure. The RuvB hexamer acts as an ATP-dependent pump, pulling dsDNA into and through the RuvAB complex. HJ branch migration allows RuvC to scan DNA until it finds its consensus sequence, where it cleaves and resolves the cruciform DNA. In Cupriavidus metallidurans (strain ATCC 43123 / DSM 2839 / NBRC 102507 / CH34) (Ralstonia metallidurans), this protein is Holliday junction branch migration complex subunit RuvA.